A 292-amino-acid polypeptide reads, in one-letter code: NAD kinase (292 aa).

Asp-73 acts as the Proton acceptor in catalysis. NAD(+) is bound by residues 73–74 (DG), 147–148 (NE), His-158, Arg-175, Asp-177, 188–193 (TGYSLS), and Gln-247.

It belongs to the NAD kinase family. A divalent metal cation is required as a cofactor.

Its subcellular location is the cytoplasm. The catalysed reaction is NAD(+) + ATP = ADP + NADP(+) + H(+). Its function is as follows. Involved in the regulation of the intracellular balance of NAD and NADP, and is a key enzyme in the biosynthesis of NADP. Catalyzes specifically the phosphorylation on 2'-hydroxyl of the adenosine moiety of NAD to yield NADP. The polypeptide is NAD kinase (Buchnera aphidicola subsp. Schizaphis graminum (strain Sg)).